The following is a 241-amino-acid chain: MATVSMRDMLKAGVHFGHQTRYWNPKMKPFIFGARNKVHIINLEKTVPMFNEALAELSKISSRKGKILFVGTKRAASEAVKEAANSCDQFFVNHRWLGGMLTNWKTVRQSIKRLKDLETQSQDGTFDKLTKKEALMRTRELEKLENSLGGIKDMGGLPDALFVIDADHEHIAIKEANNLGIPVFAIVDTNSDPDGVDFVIPGNDDAIRAVSLYLNAVAATVREGRSQDLAAQAEESFVEAE.

The protein belongs to the universal ribosomal protein uS2 family.

The chain is Small ribosomal subunit protein uS2 from Cronobacter sakazakii (strain ATCC BAA-894) (Enterobacter sakazakii).